The following is a 271-amino-acid chain: Formamidopyrimidine-DNA glycosylase (271 aa).

Catalysis depends on Pro-2, which acts as the Schiff-base intermediate with DNA. The active-site Proton donor is the Glu-3. Lys-57 functions as the Proton donor; for beta-elimination activity in the catalytic mechanism. DNA contacts are provided by His-90, Arg-109, and Lys-151. An FPG-type zinc finger spans residues 236–270 (HVYGRGGETCTQCGNLLSEIRLGQRTTVFCGICQT). Arg-260 (proton donor; for delta-elimination activity) is an active-site residue.

This sequence belongs to the FPG family. As to quaternary structure, monomer. Requires Zn(2+) as cofactor.

The catalysed reaction is Hydrolysis of DNA containing ring-opened 7-methylguanine residues, releasing 2,6-diamino-4-hydroxy-5-(N-methyl)formamidopyrimidine.. The enzyme catalyses 2'-deoxyribonucleotide-(2'-deoxyribose 5'-phosphate)-2'-deoxyribonucleotide-DNA = a 3'-end 2'-deoxyribonucleotide-(2,3-dehydro-2,3-deoxyribose 5'-phosphate)-DNA + a 5'-end 5'-phospho-2'-deoxyribonucleoside-DNA + H(+). Its function is as follows. Involved in base excision repair of DNA damaged by oxidation or by mutagenic agents. Acts as a DNA glycosylase that recognizes and removes damaged bases. Has a preference for oxidized purines, such as 7,8-dihydro-8-oxoguanine (8-oxoG). Has AP (apurinic/apyrimidinic) lyase activity and introduces nicks in the DNA strand. Cleaves the DNA backbone by beta-delta elimination to generate a single-strand break at the site of the removed base with both 3'- and 5'-phosphates. In Shewanella sp. (strain MR-7), this protein is Formamidopyrimidine-DNA glycosylase.